The primary structure comprises 435 residues: 5-methylthioadenosine/S-adenosylhomocysteine deaminase (435 aa).

Residues H65 and H67 each coordinate Zn(2+). Residues E94, R150, and H189 each contribute to the substrate site. A Zn(2+)-binding site is contributed by H216. 2 residues coordinate substrate: E219 and D304. D304 is a Zn(2+) binding site.

This sequence belongs to the metallo-dependent hydrolases superfamily. MTA/SAH deaminase family. Zn(2+) is required as a cofactor.

It carries out the reaction S-adenosyl-L-homocysteine + H2O + H(+) = S-inosyl-L-homocysteine + NH4(+). The enzyme catalyses S-methyl-5'-thioadenosine + H2O + H(+) = S-methyl-5'-thioinosine + NH4(+). In terms of biological role, catalyzes the deamination of 5-methylthioadenosine and S-adenosyl-L-homocysteine into 5-methylthioinosine and S-inosyl-L-homocysteine, respectively. Is also able to deaminate adenosine. The sequence is that of 5-methylthioadenosine/S-adenosylhomocysteine deaminase from Bacillus cereus (strain AH187).